The following is a 234-amino-acid chain: Polycomb group RING finger protein 5-A (234 aa).

The RING-type zinc-finger motif lies at 18 to 57 (CSICRGYLIKPTAVTECLHTFCKSCIVQHFEESNECPECG). The disordered stretch occupies residues 97–130 (FWRKHKIKSNGEDGPRAKKSRLSGEDDDGNGGDY).

In terms of assembly, component of a PRC1-like complex.

Its subcellular location is the nucleus. In terms of biological role, component of Polycomb group (PcG) multiprotein complexes; the complex class is required to maintain the transcriptionally repressive state of some genes. This chain is Polycomb group RING finger protein 5-A, found in Danio rerio (Zebrafish).